Consider the following 182-residue polypeptide: Protein Syd (182 aa).

The protein belongs to the Syd family.

Its subcellular location is the cell inner membrane. In terms of biological role, interacts with the SecY protein in vivo. May bind preferentially to an uncomplexed state of SecY, thus functioning either as a chelating agent for excess SecY in the cell or as a regulatory factor that negatively controls the translocase function. The chain is Protein Syd from Aliivibrio salmonicida (strain LFI1238) (Vibrio salmonicida (strain LFI1238)).